Consider the following 536-residue polypeptide: MEKRALIAVILSIVFFYGYSALFPPPKKEAPAPSAQQAVTGSQPGAPQASVAAVPAPSPVPAAAVKAQQKEIAVETPDYTAVFSTQGGSLTRLVLKKYRETADLTGKHVTLVDERDPSAYTLSTRAAGIGLDPSALFVSSADSLTVEAGEEKKELAFTWISPAGVTVRKIYTFQGGNYGIDMVYQTANSGTARVGAAFQTVMTYPAVPRVKESRLETFGPVTFAQDKLTEEKVKDLVGQGKSYSAPLWSGFADKYFLSAVVGQGGSIATAAVRSTPRGMLEDTITAPETSLNPGESKSVAYRLYFGPKDLDILKAQGNSLERAIDLGWFAMLAKPLLHSLKFFYKYVHNYGIAIIIITVILKIIFYPLTHSSYKSMKQMQKLQPKMQEVREKYKNDRDAMNKAIMELYQTHKVNPVGGCLPMLVQIPVFFALYKALMFSIELRHAPFMLWIQDLAGKDPYYVTPIIMGITMVIQQKMTPSQMDPMQQKMMMALPVVFTFMFLNFPSGLVLYWLVNNVLTIIQQSYINKSIAAAEAK.

A helical membrane pass occupies residues 5–25 (ALIAVILSIVFFYGYSALFPP). Residues 30–54 (APAPSAQQAVTGSQPGAPQASVAAV) are disordered. Positions 31–54 (PAPSAQQAVTGSQPGAPQASVAAV) are enriched in low complexity. Transmembrane regions (helical) follow at residues 350-370 (YGIA…PLTH), 420-440 (LPML…MFSI), 454-474 (LAGK…MVIQ), and 494-514 (PVVF…YWLV).

Belongs to the OXA1/ALB3/YidC family. Type 1 subfamily. As to quaternary structure, interacts with the Sec translocase complex via SecD. Specifically interacts with transmembrane segments of nascent integral membrane proteins during membrane integration.

The protein resides in the cell inner membrane. Required for the insertion and/or proper folding and/or complex formation of integral membrane proteins into the membrane. Involved in integration of membrane proteins that insert both dependently and independently of the Sec translocase complex, as well as at least some lipoproteins. Aids folding of multispanning membrane proteins. This is Membrane protein insertase YidC from Geobacter metallireducens (strain ATCC 53774 / DSM 7210 / GS-15).